Here is a 739-residue protein sequence, read N- to C-terminus: Probable beta-glucosidase L (739 aa).

A signal peptide spans 1 to 17; sequence MQTLFLSLLAAAVTVHA. N-linked (GlcNAc...) asparagine glycosylation is found at N40 and N224. D252 is a catalytic residue. Residue N398 is glycosylated (N-linked (GlcNAc...) asparagine).

This sequence belongs to the glycosyl hydrolase 3 family.

It localises to the secreted. The catalysed reaction is Hydrolysis of terminal, non-reducing beta-D-glucosyl residues with release of beta-D-glucose.. It participates in glycan metabolism; cellulose degradation. In terms of biological role, beta-glucosidases are one of a number of cellulolytic enzymes involved in the degradation of cellulosic biomass. Catalyzes the last step releasing glucose from the inhibitory cellobiose. This chain is Probable beta-glucosidase L (bglL), found in Aspergillus fumigatus (strain CBS 144.89 / FGSC A1163 / CEA10) (Neosartorya fumigata).